We begin with the raw amino-acid sequence, 367 residues long: Glutamate 5-kinase (367 aa).

Lys-10 is an ATP binding site. 3 residues coordinate substrate: Ser-50, Asp-137, and Asn-149. Residues 169-170 (TD) and 211-217 (TGGMATK) each bind ATP. In terms of domain architecture, PUA spans 275–353 (AGVIIVDNGA…QEISQILGYE (79 aa)).

It belongs to the glutamate 5-kinase family.

The protein localises to the cytoplasm. The enzyme catalyses L-glutamate + ATP = L-glutamyl 5-phosphate + ADP. It functions in the pathway amino-acid biosynthesis; L-proline biosynthesis; L-glutamate 5-semialdehyde from L-glutamate: step 1/2. Its function is as follows. Catalyzes the transfer of a phosphate group to glutamate to form L-glutamate 5-phosphate. The protein is Glutamate 5-kinase of Proteus mirabilis (strain HI4320).